Consider the following 253-residue polypeptide: Phosphate import ATP-binding protein PstB 1 (253 aa).

Positions 7–248 (LTVSDLSLYY…PEKQETSDYI (242 aa)) constitute an ABC transporter domain. An ATP-binding site is contributed by 39-46 (GPSGCGKS).

Belongs to the ABC transporter superfamily. Phosphate importer (TC 3.A.1.7) family. As to quaternary structure, the complex is composed of two ATP-binding proteins (PstB), two transmembrane proteins (PstC and PstA) and a solute-binding protein (PstS).

It localises to the cell membrane. The enzyme catalyses phosphate(out) + ATP + H2O = ADP + 2 phosphate(in) + H(+). In terms of biological role, part of the ABC transporter complex PstSACB involved in phosphate import. Responsible for energy coupling to the transport system. This is Phosphate import ATP-binding protein PstB 1 from Lactococcus lactis subsp. lactis (strain IL1403) (Streptococcus lactis).